The chain runs to 86 residues: Protein IDA-LIKE 1 (86 aa).

A signal peptide spans Met-1 to Ala-27.

As to expression, expressed in roots.

The protein resides in the secreted. The protein localises to the extracellular space. Functionally, involved in an ethylene-independent separation step of floral abscission. May act with RLK5 and HSL2 as ligand-receptor pairs. In Arabidopsis thaliana (Mouse-ear cress), this protein is Protein IDA-LIKE 1 (IDL1).